A 224-amino-acid chain; its full sequence is Lipoprotein-releasing system ATP-binding protein LolD (224 aa).

The region spanning 5–224 (LRAENIKKVI…GKVVGEITRV (220 aa)) is the ABC transporter domain. 37 to 44 (GASGSGKS) provides a ligand contact to ATP.

This sequence belongs to the ABC transporter superfamily. Lipoprotein translocase (TC 3.A.1.125) family. In terms of assembly, the complex is composed of two ATP-binding proteins (LolD) and two transmembrane proteins (LolC and LolE).

It is found in the cell inner membrane. Part of the ABC transporter complex LolCDE involved in the translocation of mature outer membrane-directed lipoproteins, from the inner membrane to the periplasmic chaperone, LolA. Responsible for the formation of the LolA-lipoprotein complex in an ATP-dependent manner. The sequence is that of Lipoprotein-releasing system ATP-binding protein LolD from Aquifex aeolicus (strain VF5).